Here is a 50-residue protein sequence, read N- to C-terminus: Nosiheptide precursor (50 aa).

Positions 38 to 39 (SC) form a cross-link, thiazole-4-carboxylic acid (Ser-Cys). The 3-hydroxypyridine-2,5-dicarboxylic acid (Ser-Cys) (with S-47) cross-link spans 38–46 (SCTTCECCC). The 3-hydroxypyridine-2,5-dicarboxylic acid (Ser-Ser) (with C-46) cross-link spans 38 to 47 (SCTTCECCCS). The thiazole-4-carboxylic acid (Thr-Cys) cross-link spans 41–42 (TC). Glutamate 43 bears the 4-hydroxyglutamate mark. The thiazole-4-carboxylic acid (Glu-Cys) cross-link spans 43–44 (EC). The 2-(cystein-S-ylcarbonyl)-3-methyl-4-(glutam-5-yloxy)methylindole (Glu-Cys) cross-link spans 43-45 (ECC). Residues 45-46 (CC) constitute a cross-link (thiazole-4-carboxylic acid (Cys-Cys)). Residues 47–48 (SC) constitute a cross-link (thiazole-4-carboxylic acid (Ser-Cys)). 2,3-didehydroalanine (Ser) is present on serine 49. The residue at position 49 (serine 49) is a Serine amide; atypical.

Belongs to the thiocillin family. Post-translationally, the amidation of Ser-49 is produced by the oxidative cleavage of Ser-50 rather than of a glycine, as in eukaryotes.

Its function is as follows. Inhibits bacterial protein biosynthesis by binding to ribosomes. Specifically, binds to the complex of 23S rRNA and ribosomal protein L11 (RPLK) in the 50S ribosomal subunit. While allowing a weak binding of elongation factor G (EF-G) to the ribosome and subsequent GTP-hydrolysis, probably impairs conformational changes in both the ribosome and EF-G which are necessary for translocation. In vitro, inhibits Gram-positive bacteria S.aureus strain 209P (MIC=0.0009 ug/ml), S.aureus strain 133 (MIC=0.0019 ug/ml), S.aureus strain B3 (MIC=0.003 ug/ml), S.aureus strain Hb (MIC=0.003 ug/ml), M.citreus strain ATCC 8411 (MIC=0.0038 ug/ml), M.lysodeikticus strain ATCC 4698 (MIC=0.003 ug/ml), S.lutea strain ATCC 9341 (MIC=0.0011 ug/ml), S.faecalis strain ATCC 9790 (MIC=0.0007 ug/ml), S.viridans (MIC=0.0065 ug/ml), S.pyogenes hemolyticus strain Dig7 (MIC=0.00028 ug/ml), D.pneumoniae strain Til (MIC=0.00015 ug/ml), N.catrrhalis (MIC=0.0017 ug/ml), L.casei strain ATCC 6633 (MIC=0.003 ug/ml), B.cereus strain ATCC 6630 (MIC=0.0071 ug/ml) and various isolates of L.monocytogenes. In vitro, inhibits Gram-negative bacterium P.multocida strain A125 (MIC=0.0024 ug/ml) but not M.smegmatis strain ATCC 6630, S.typhimurium, A.aerogenes strain ATCC 8308, P.vulgaris, K.pneumoniae strain ATCC 10031, S.marcescens strain A476, P.aeruginosa strain Bass or B.bronchiseptica strain CN387. Does not inhibit Gram-negative bacterium E.coli strain ATCC 9637 but does inhibit purified ribosomes from E.coli. In vivo, has no systemic effect in mice infected with staphylococci or streptococci when applied orally or subcutaneously. Has a local effect in mice infected subcutaneously or intraperitoneally with staphylococci when applied immediately afterwards. Is not toxic to mice. The polypeptide is Nosiheptide precursor (Streptomyces actuosus).